Reading from the N-terminus, the 122-residue chain is Fluoride-specific ion channel FluC (122 aa).

4 consecutive transmembrane segments (helical) span residues 4–24 (LAVL…SIFI), 33–53 (LGTM…SIYL), 66–86 (LLIT…LEGI), and 95–115 (LKAF…VALG). Positions 73 and 76 each coordinate Na(+).

This sequence belongs to the fluoride channel Fluc/FEX (TC 1.A.43) family.

It is found in the cell inner membrane. It catalyses the reaction fluoride(in) = fluoride(out). Its activity is regulated as follows. Na(+) is not transported, but it plays an essential structural role and its presence is essential for fluoride channel function. Functionally, fluoride-specific ion channel. Important for reducing fluoride concentration in the cell, thus reducing its toxicity. The chain is Fluoride-specific ion channel FluC from Hydrogenobaculum sp. (strain Y04AAS1).